A 346-amino-acid chain; its full sequence is Tetraacyldisaccharide 4'-kinase (346 aa).

54 to 61 (TVGGAGKT) lines the ATP pocket.

The protein belongs to the LpxK family.

The enzyme catalyses a lipid A disaccharide + ATP = a lipid IVA + ADP + H(+). The protein operates within glycolipid biosynthesis; lipid IV(A) biosynthesis; lipid IV(A) from (3R)-3-hydroxytetradecanoyl-[acyl-carrier-protein] and UDP-N-acetyl-alpha-D-glucosamine: step 6/6. Functionally, transfers the gamma-phosphate of ATP to the 4'-position of a tetraacyldisaccharide 1-phosphate intermediate (termed DS-1-P) to form tetraacyldisaccharide 1,4'-bis-phosphate (lipid IVA). This chain is Tetraacyldisaccharide 4'-kinase, found in Rhizobium meliloti (strain 1021) (Ensifer meliloti).